The sequence spans 234 residues: ATP synthase subunit a 2 (234 aa).

The next 5 helical transmembrane spans lie at 20-40 (ATLI…WFVT), 78-98 (YLPF…LSVI), 107-127 (SLST…LYGV), 169-189 (VMSG…FFPV), and 194-214 (LGLL…MVFI).

Belongs to the ATPase A chain family. As to quaternary structure, F-type ATPases have 2 components, CF(1) - the catalytic core - and CF(0) - the membrane proton channel. CF(1) has five subunits: alpha(3), beta(3), gamma(1), delta(1), epsilon(1). CF(0) has four main subunits: a, b, b' and c.

It is found in the cellular thylakoid membrane. Functionally, key component of the proton channel; it plays a direct role in the translocation of protons across the membrane. The sequence is that of ATP synthase subunit a 2 from Acaryochloris marina (strain MBIC 11017).